Consider the following 92-residue polypeptide: Small ribosomal subunit protein uS19c (92 aa).

It belongs to the universal ribosomal protein uS19 family.

The protein resides in the plastid. Its subcellular location is the chloroplast. Functionally, protein S19 forms a complex with S13 that binds strongly to the 16S ribosomal RNA. In Spirogyra maxima (Green alga), this protein is Small ribosomal subunit protein uS19c.